The following is a 247-amino-acid chain: Carboxy-S-adenosyl-L-methionine synthase (247 aa).

Residues tyrosine 40, 65 to 67 (GCS), 90 to 91 (DN), 122 to 123 (DI), asparagine 137, and arginine 204 contribute to the S-adenosyl-L-methionine site.

The protein belongs to the class I-like SAM-binding methyltransferase superfamily. Cx-SAM synthase family. In terms of assembly, homodimer.

It carries out the reaction prephenate + S-adenosyl-L-methionine = carboxy-S-adenosyl-L-methionine + 3-phenylpyruvate + H2O. In terms of biological role, catalyzes the conversion of S-adenosyl-L-methionine (SAM) to carboxy-S-adenosyl-L-methionine (Cx-SAM). The chain is Carboxy-S-adenosyl-L-methionine synthase from Stutzerimonas stutzeri (strain A1501) (Pseudomonas stutzeri).